The primary structure comprises 165 residues: Putative inactive neutral ceramidase B (165 aa).

Belongs to the neutral ceramidase family. As to expression, ubiquitous. Expression is reduced with increasing age and in late-onset Alzheimer disease (LOAD) patients. This reduction is even more pronounced in patients with an affected mother.

This Homo sapiens (Human) protein is Putative inactive neutral ceramidase B.